A 352-amino-acid polypeptide reads, in one-letter code: C-X-C chemokine receptor type 4 (352 aa).

The interval 1–21 (MEGISIYTSDNYSEELGSGDY) is important for chemokine binding and signaling. At 1-38 (MEGISIYTSDNYSEELGSGDYDSIKEPCFREENAHFNR) the chain is on the extracellular side. Tyr-7 carries the post-translational modification Sulfotyrosine. A glycan (N-linked (GlcNAc...) asparagine) is linked at Asn-11. Tyr-12 carries the post-translational modification Sulfotyrosine. Ser-18 is a glycosylation site (O-linked (Xyl...) (chondroitin sulfate) serine). Tyr-21 bears the Sulfotyrosine mark. Intrachain disulfides connect Cys-28-Cys-274 and Cys-109-Cys-186. A helical transmembrane segment spans residues 39-63 (IFLPTIYSIIFLTGIVGNGLVILVM). At 64-77 (GYQKKLRSMTDKYR) the chain is on the cytoplasmic side. Residues 78–99 (LHLSVADLLFVITLPFWAVDAV) traverse the membrane as a helical segment. The interval 94–97 (WAVD) is chemokine binding. Residues 100–110 (ANWYFGNFLCK) are Extracellular-facing. A helical transmembrane segment spans residues 111 to 130 (AVHVIYTVNLYSSVLILAFI). The chemokine binding stretch occupies residues 113-117 (HVIYT). The Cytoplasmic segment spans residues 131 to 154 (SLDRYLAIVHATNSQRPRKLLAEK). The Important for signaling signature appears at 133 to 135 (DRY). The segment at 135 to 147 (YLAIVHATNSQRP) is involved in dimerization; when bound to chemokine. A helical transmembrane segment spans residues 155–174 (VVYVGVWIPALLLTIPDFIF). Residues 175–195 (ANVSEAEDRYICDRFYPNDLW) lie on the Extracellular side of the membrane. Positions 186–190 (CDRFY) are chemokine binding, important for signaling. The segment at 191-210 (PNDLWVVVFQFQHIMVGLIL) is involved in dimerization. The chain crosses the membrane as a helical span at residues 196–216 (VVVFQFQHIMVGLILPGIVIL). The Cytoplasmic portion of the chain corresponds to 217-241 (SCYCIIISKLSHSKGHQKRKALKTT). Residues 242–261 (VILILAFFACWLPYYIGISI) traverse the membrane as a helical segment. Residues 262–282 (DSFILLEIIKQGCEFESTVHK) are Extracellular-facing. Positions 266 to 268 (LLE) are involved in dimerization. The chain crosses the membrane as a helical span at residues 283–302 (WISITEALAFFHCCLNPILY). The Cytoplasmic segment spans residues 303-352 (AFLGAKFKSSAQHALTSVSRGSSLKILSKGKRGGHSSVSTESESSSFHSS). Ser-319 and Ser-321 each carry phosphoserine. Ser-324 and Ser-325 each carry phosphoserine; by PKC and GRK6. The disordered stretch occupies residues 329-352 (LSKGKRGGHSSVSTESESSSFHSS). Ser-330 bears the Phosphoserine; by GRK6 mark. A Glycyl lysine isopeptide (Lys-Gly) (interchain with G-Cter in ubiquitin) cross-link involves residue Lys-331. Residues 337–352 (HSSVSTESESSSFHSS) are compositionally biased toward low complexity. Ser-339 is modified (phosphoserine; by GRK6). Phosphoserine occurs at positions 348 and 351.

This sequence belongs to the G-protein coupled receptor 1 family. Monomer. Can form homodimers. Interacts with CD164. Interacts with ARRB2; the interaction is dependent on the C-terminal phosphorylation of CXCR4 and allows activation of MAPK1 and MAPK3. Interacts with ARR3; the interaction is dependent on the C-terminal phosphorylation of CXCR4 and modulates calcium mobilization. Interacts with RNF113A; the interaction, enhanced by CXCL12, promotes CXCR4 ubiquitination and subsequent degradation. Interacts (via the cytoplasmic C-terminal) with ITCH (via the WW domains I and II); the interaction, enhanced by CXCL12, promotes CXCR4 ubiquitination and leads to its degradation. Interacts with extracellular ubiquitin. Interacts with DBN1; this interaction is enhanced by antigenic stimulation. Following LPS binding, may form a complex with GDF5, HSP90AA1 and HSPA8. In terms of processing, phosphorylated on agonist stimulation. Rapidly phosphorylated on serine and threonine residues in the C-terminal. Phosphorylation at Ser-324 and Ser-325 leads to recruitment of ITCH, ubiquitination and protein degradation. Ubiquitinated after ligand binding, leading to its degradation. Ubiquitinated by ITCH at the cell membrane on agonist stimulation. The ubiquitin-dependent mechanism, endosomal sorting complex required for transport (ESCRT), then targets CXCR4 for lysosomal degradation. This process is dependent also on prior Ser-/Thr-phosphorylation in the C-terminal of CXCR4. Also binding of ARRB1 to STAM negatively regulates CXCR4 sorting to lysosomes though modulating ubiquitination of SFR5S. Post-translationally, sulfation is required for efficient binding of CXCL12/SDF-1alpha and promotes its dimerization. In terms of processing, O- and N-glycosylated. N-glycosylation can mask coreceptor function. The O-glycosylation chondroitin sulfate attachment does not affect interaction with CXCL12/SDF-1alpha nor its coreceptor activity.

It localises to the cell membrane. The protein localises to the cell junction. It is found in the early endosome. The protein resides in the late endosome. Its subcellular location is the lysosome. In terms of biological role, receptor for the C-X-C chemokine CXCL12/SDF-1 that transduces a signal by increasing intracellular calcium ion levels and enhancing MAPK1/MAPK3 activation. Involved in the AKT signaling cascade. Plays a role in regulation of cell migration, e.g. during wound healing. Acts as a receptor for extracellular ubiquitin; leading to enhanced intracellular calcium ions and reduced cellular cAMP levels. Binds bacterial lipopolysaccharide (LPS) et mediates LPS-induced inflammatory response, including TNF secretion by monocytes. Involved in hematopoiesis and in cardiac ventricular septum formation. Also plays an essential role in vascularization of the gastrointestinal tract, probably by regulating vascular branching and/or remodeling processes in endothelial cells. Involved in cerebellar development. In the CNS, could mediate hippocampal-neuron survival. In Tupaia chinensis (Chinese tree shrew), this protein is C-X-C chemokine receptor type 4 (CXCR4).